An 85-amino-acid chain; its full sequence is Small ribosomal subunit protein bS16c (85 aa).

Belongs to the bacterial ribosomal protein bS16 family.

It is found in the plastid. The protein localises to the chloroplast. The protein is Small ribosomal subunit protein bS16c of Cucumis sativus (Cucumber).